Here is a 375-residue protein sequence, read N- to C-terminus: Squamosa promoter-binding-like protein 9 (375 aa).

2 disordered regions span residues Met-1–Gly-30 and Gly-43–Arg-73. The segment covering Ser-18–Gly-30 has biased composition (low complexity). The SBP-type zinc-finger motif lies at Ile-71–Pro-148. Zn(2+)-binding residues include Cys-74, Cys-79, Cys-96, His-99, Cys-115, Cys-118, His-122, and Cys-134. The Bipartite nuclear localization signal signature appears at Lys-131–Lys-147. 2 disordered regions span residues Leu-252 to Arg-278 and Ser-345 to Leu-375. A compositionally biased stretch (low complexity) spans Asn-262–Asn-275. Over residues Ser-345–Arg-362 the composition is skewed to basic and acidic residues. Residues Ala-363–Leu-375 show a composition bias toward polar residues.

Requires Zn(2+) as cofactor.

It is found in the nucleus. The protein localises to the cytoplasm. Its function is as follows. Trans-acting factor that binds specifically to the consensus nucleotide sequence 5'-TNCGTACAA-3'. In Arabidopsis thaliana (Mouse-ear cress), this protein is Squamosa promoter-binding-like protein 9 (SPL9).